A 185-amino-acid polypeptide reads, in one-letter code: Acireductone dioxygenase (185 aa).

Fe(2+)-binding residues include His97, His99, Glu103, and His141. Ni(2+) is bound by residues His97, His99, Glu103, and His141.

This sequence belongs to the acireductone dioxygenase (ARD) family. In terms of assembly, monomer. It depends on Fe(2+) as a cofactor. Ni(2+) serves as cofactor.

The enzyme catalyses 1,2-dihydroxy-5-(methylsulfanyl)pent-1-en-3-one + O2 = 3-(methylsulfanyl)propanoate + CO + formate + 2 H(+). It carries out the reaction 1,2-dihydroxy-5-(methylsulfanyl)pent-1-en-3-one + O2 = 4-methylsulfanyl-2-oxobutanoate + formate + 2 H(+). It participates in amino-acid biosynthesis; L-methionine biosynthesis via salvage pathway; L-methionine from S-methyl-5-thio-alpha-D-ribose 1-phosphate: step 5/6. In terms of biological role, catalyzes 2 different reactions between oxygen and the acireductone 1,2-dihydroxy-3-keto-5-methylthiopentene (DHK-MTPene) depending upon the metal bound in the active site. Fe-containing acireductone dioxygenase (Fe-ARD) produces formate and 2-keto-4-methylthiobutyrate (KMTB), the alpha-ketoacid precursor of methionine in the methionine recycle pathway. Ni-containing acireductone dioxygenase (Ni-ARD) produces methylthiopropionate, carbon monoxide and formate, and does not lie on the methionine recycle pathway. This Stenotrophomonas maltophilia (strain R551-3) protein is Acireductone dioxygenase.